The following is a 510-amino-acid chain: NAD(P)H-quinone oxidoreductase subunit 2 B, chloroplastic (510 aa).

Transmembrane regions (helical) follow at residues 24-44 (LLLFHGSFIFPECILIFGLIL), 57-77 (IPWLYFISSTSLVMSITALLF), 99-119 (IFQFLILLCSTLCIPLSVEYI), 124-144 (MAITEFLLFVLTATLGGMFLC), 183-203 (YLLMGGASSSILVHGFSWLYG), 227-247 (PGISIALISITVGIGFKLSPA), 295-315 (WHLLLEILAILSMILGNLIAI), 323-343 (MLAYSSIGQIGYVIIGIIVGD), 347-367 (GYASMITYMLFYISMNLGTFA), 395-415 (ALSSALCLLSLGGLPPLAGFF), 418-438 (LHLFWCGWQAGLYFLVSIGLL), and 484-504 (MIVCVIASTIPGISMNPIIAI).

It belongs to the complex I subunit 2 family. As to quaternary structure, NDH is composed of at least 16 different subunits, 5 of which are encoded in the nucleus.

Its subcellular location is the plastid. The protein resides in the chloroplast thylakoid membrane. The enzyme catalyses a plastoquinone + NADH + (n+1) H(+)(in) = a plastoquinol + NAD(+) + n H(+)(out). It catalyses the reaction a plastoquinone + NADPH + (n+1) H(+)(in) = a plastoquinol + NADP(+) + n H(+)(out). Functionally, NDH shuttles electrons from NAD(P)H:plastoquinone, via FMN and iron-sulfur (Fe-S) centers, to quinones in the photosynthetic chain and possibly in a chloroplast respiratory chain. The immediate electron acceptor for the enzyme in this species is believed to be plastoquinone. Couples the redox reaction to proton translocation, and thus conserves the redox energy in a proton gradient. The sequence is that of NAD(P)H-quinone oxidoreductase subunit 2 B, chloroplastic from Calycanthus floridus var. glaucus (Eastern sweetshrub).